The primary structure comprises 22 residues: Conotoxin MIIIJ (22 aa).

Gln-1 is modified (pyrrolidone carboxylic acid). Cystine bridges form between Cys-3-Cys-21, Cys-4-Cys-19, and Cys-9-Cys-22.

The protein belongs to the conotoxin M superfamily. As to expression, expressed by the venom duct.

The protein resides in the secreted. Probable competitive antagonist of fish muscle acetylcholine receptor. Inhibits postsynaptic nicotinic acetylcholine receptors (nAChRs) from fish (zebrafish and goldfish) and frogs (IC(50)=0.1 uM). Protects these receptors from block by alpha-bungarotoxin and alpha-conotoxin EI. Does not block nAChRs at the neuromuscular junction of Rana pipiens. Shows a weak inhibition on mammalian adult and fetal muscle nAChRs (alpha-1-beta-1-delta-epsilon/CHRNA1-CHRNB1-CHRND-CHRNE and alpha-1 beta-1 gamma delta/CHRNA1-CHRNB1-CHRNG-CHRND) (IC(50)=3-45 uM). In vivo, induces paralysis in goldfish (Carassius auratus) but not mice. The polypeptide is Conotoxin MIIIJ (Conus magus (Magical cone)).